Here is a 552-residue protein sequence, read N- to C-terminus: Glutamyl-tRNA reductase 1, chloroplastic (552 aa).

Substrate is bound by residues 150–153, Ser210, 215–217, and Gln221; these read TCNR and EGQ. Cys151 serves as the catalytic Nucleophile. 292–297 contacts NADP(+); the sequence is GAGKMG.

Belongs to the glutamyl-tRNA reductase family. Primarily in cotyledons and hypocotyls of greening cucumber seedlings.

The protein resides in the plastid. It is found in the chloroplast. The enzyme catalyses (S)-4-amino-5-oxopentanoate + tRNA(Glu) + NADP(+) = L-glutamyl-tRNA(Glu) + NADPH + H(+). Its pathway is porphyrin-containing compound metabolism; protoporphyrin-IX biosynthesis; 5-aminolevulinate from L-glutamyl-tRNA(Glu): step 1/2. Functionally, catalyzes the NADPH-dependent reduction of glutamyl-tRNA(Glu) to glutamate 1-semialdehyde (GSA). This Cucumis sativus (Cucumber) protein is Glutamyl-tRNA reductase 1, chloroplastic (HEMA1).